The chain runs to 369 residues: MKSAISSSLFFNSKNLLNPNPLSRFISLKSNFLPKLSPRSITSHTLKLPSSSTSALRSISSSMASSFNPEQARVPSALPLPAPPLTKFNIGLCQLSVTSDKKRNISHAKKAIEEAASKGAKLVLLPEIWNSPYSNDSFPVYAEEIDAGGDASPSTAMLSEVSKRLKITIIGGSIPERVGDRLYNTCCVFGSDGELKAKHRKIHLFDIDIPGKITFMESKTLTAGETPTIVDTDVGRIGIGICYDIRFQELAMIYAARGAHLLCYPGAFNMTTGPLHWELLQRARATDNQLYVATCSPARDSGAGYTAWGHSTLVGPFGEVLATTEHEEAIIIAEIDYSILEQRRTSLPLNRQRRGDLYQLVDVQRLDSK.

A chloroplast-targeting transit peptide spans 1 to 63 (MKSAISSSLF…SALRSISSSM (63 aa)). Position 64 is an N-acetylalanine (Ala-64). Residues 88–337 (FNIGLCQLSV…EAIIIAEIDY (250 aa)) form the CN hydrolase domain. Glu-127 acts as the Proton acceptor in catalysis. Lys-201 functions as the Proton donor in the catalytic mechanism. Residue Cys-242 is the Nucleophile of the active site.

This sequence belongs to the nitrilase superfamily. NIT1/NIT2 family.

It localises to the plastid. The protein resides in the chloroplast. The enzyme catalyses a monoamide of a dicarboxylate + H2O = a dicarboxylate + NH4(+). Omega-amidase involved in the metabolism of asparagine. Probably also closely coupled with glutamine transamination in the methionine salvage cycle. Can use alpha-ketosuccinamate and alpha-hydroxysuccinamate as substrates, producing respectively oxaloacetate and malate, or alpha-ketoglutaramate, producing alpha-ketoglutarate. The polypeptide is Omega-amidase, chloroplastic (Arabidopsis thaliana (Mouse-ear cress)).